A 29-amino-acid polypeptide reads, in one-letter code: GLPVCGETCTLGKCYTAGCSCSWPVCYRN.

Positions 1 to 29 (GLPVCGETCTLGKCYTAGCSCSWPVCYRN) form a cross-link, cyclopeptide (Gly-Asn). 3 disulfides stabilise this stretch: Cys-5–Cys-19, Cys-9–Cys-21, and Cys-14–Cys-26.

In terms of processing, this is a cyclic peptide.

Probably participates in a plant defense mechanism. This chain is Vodo peptide N, found in Viola odorata (Sweet violet).